Here is a 374-residue protein sequence, read N- to C-terminus: Peptide chain release factor 2 (374 aa).

N5-methylglutamine is present on Q250.

Belongs to the prokaryotic/mitochondrial release factor family. Post-translationally, methylated by PrmC. Methylation increases the termination efficiency of RF2.

It localises to the cytoplasm. In terms of biological role, peptide chain release factor 2 directs the termination of translation in response to the peptide chain termination codons UGA and UAA. In Roseobacter denitrificans (strain ATCC 33942 / OCh 114) (Erythrobacter sp. (strain OCh 114)), this protein is Peptide chain release factor 2.